We begin with the raw amino-acid sequence, 67 residues long: COP9 signalosome complex subunit 9 homolog (67 aa).

A disordered region spans residues Met1–Met31.

It belongs to the CSN9 family. Probable component of the COP9 signalosome (CSN) complex.

In terms of biological role, component of the COP9 signalosome complex (CSN), a complex involved in various cellular and developmental processes. The CSN complex is an essential regulator of the ubiquitin (Ubl) conjugation pathway by mediating the deneddylation of the cullin subunits of SCF-type E3 ligase complexes, leading to decrease the Ubl ligase activity. In Drosophila melanogaster (Fruit fly), this protein is COP9 signalosome complex subunit 9 homolog.